We begin with the raw amino-acid sequence, 302 residues long: Cyclin-C (302 aa).

Residues 46–152 form the Cyclin N-terminal domain; it reads NFITAVATEG…VYDSEFILVE (107 aa). Residues 281 to 302 are disordered; the sequence is LPKPNQQPPPQQQHQHQQGYHL. Positions 292–302 are enriched in low complexity; it reads QQHQHQQGYHL.

The protein belongs to the cyclin family. Cyclin C subfamily. In terms of assembly, component of the Mediator complex.

The protein resides in the nucleus. Component of the Mediator complex, a coactivator involved in regulated gene transcription of nearly all RNA polymerase II-dependent genes. Mediator functions as a bridge to convey information from gene-specific regulatory proteins to the basal RNA polymerase II transcription machinery. Mediator is recruited to promoters by direct interactions with regulatory proteins and serves as a scaffold for the assembly of a functional preinitiation complex with RNA polymerase II and the general transcription factors. Binds to and activates cyclin-dependent kinase cdk-8 that phosphorylates the CTD (C-terminal domain) of the large subunit of RNA polymerase II (RNAp II), which may inhibit the formation of a transcription initiation complex. The protein is Cyclin-C (cic-1) of Caenorhabditis elegans.